We begin with the raw amino-acid sequence, 331 residues long: Phosphate acyltransferase (331 aa).

Belongs to the PlsX family. As to quaternary structure, homodimer. Probably interacts with PlsY.

It localises to the cytoplasm. It catalyses the reaction a fatty acyl-[ACP] + phosphate = an acyl phosphate + holo-[ACP]. It functions in the pathway lipid metabolism; phospholipid metabolism. Its function is as follows. Catalyzes the reversible formation of acyl-phosphate (acyl-PO(4)) from acyl-[acyl-carrier-protein] (acyl-ACP). This enzyme utilizes acyl-ACP as fatty acyl donor, but not acyl-CoA. The sequence is that of Phosphate acyltransferase from Mesoplasma florum (strain ATCC 33453 / NBRC 100688 / NCTC 11704 / L1) (Acholeplasma florum).